Reading from the N-terminus, the 125-residue chain is Small ribosomal subunit protein bS6 (125 aa).

The disordered stretch occupies residues 100–125; the sequence is SPMVKAREERKPLTEVENNDFEDAEE. Basic and acidic residues predominate over residues 104-113; the sequence is KAREERKPLT. The segment covering 116-125 has biased composition (acidic residues); sequence ENNDFEDAEE.

Belongs to the bacterial ribosomal protein bS6 family.

Its function is as follows. Binds together with bS18 to 16S ribosomal RNA. In Histophilus somni (strain 129Pt) (Haemophilus somnus), this protein is Small ribosomal subunit protein bS6.